The following is a 153-amino-acid chain: Transcription antitermination protein NusB (153 aa).

It belongs to the NusB family.

Functionally, involved in transcription antitermination. Required for transcription of ribosomal RNA (rRNA) genes. Binds specifically to the boxA antiterminator sequence of the ribosomal RNA (rrn) operons. The polypeptide is Transcription antitermination protein NusB (Clostridium tetani (strain Massachusetts / E88)).